The primary structure comprises 644 residues: 1-deoxy-D-xylulose-5-phosphate synthase (644 aa).

Thiamine diphosphate contacts are provided by residues His72 and 113–115 (GHA). Residue Asp144 coordinates Mg(2+). Thiamine diphosphate contacts are provided by residues 145–146 (GA), Asn174, Tyr287, and Glu370. Asn174 serves as a coordination point for Mg(2+).

It belongs to the transketolase family. DXPS subfamily. As to quaternary structure, homodimer. Requires Mg(2+) as cofactor. The cofactor is thiamine diphosphate.

The catalysed reaction is D-glyceraldehyde 3-phosphate + pyruvate + H(+) = 1-deoxy-D-xylulose 5-phosphate + CO2. It functions in the pathway metabolic intermediate biosynthesis; 1-deoxy-D-xylulose 5-phosphate biosynthesis; 1-deoxy-D-xylulose 5-phosphate from D-glyceraldehyde 3-phosphate and pyruvate: step 1/1. In terms of biological role, catalyzes the acyloin condensation reaction between C atoms 2 and 3 of pyruvate and glyceraldehyde 3-phosphate to yield 1-deoxy-D-xylulose-5-phosphate (DXP). The polypeptide is 1-deoxy-D-xylulose-5-phosphate synthase (Prochlorococcus marinus (strain MIT 9313)).